The following is a 636-amino-acid chain: ATP-dependent DNA helicase YoaA (636 aa).

A Helicase ATP-binding domain is found at 10-272 (QLAKAIPGFK…KDTQQLQKCA (263 aa)). 45-52 (AGTGTGKT) provides a ligand contact to ATP. Positions 108, 168, 173, and 179 each coordinate [4Fe-4S] cluster. The DEAH box motif lies at 225–228 (DEAH).

Belongs to the helicase family. DinG subfamily. In terms of assembly, interacts with the DNA polymerase III subunit Chi (holC), probably as a 1:1 complex. It depends on [4Fe-4S] cluster as a cofactor. Requires Mg(2+) as cofactor.

The enzyme catalyses Couples ATP hydrolysis with the unwinding of duplex DNA at the replication fork by translocating in the 5'-3' direction. This creates two antiparallel DNA single strands (ssDNA). The leading ssDNA polymer is the template for DNA polymerase III holoenzyme which synthesizes a continuous strand.. It carries out the reaction ATP + H2O = ADP + phosphate + H(+). Its activity is regulated as follows. Non-hydrolyzable ATP analogs ATP-gamma-S and adenylyl-imidodiphosphate (AMP-PNP) inhibit helicase activity. Its function is as follows. DNA-dependent ATPase and 5'-3' DNA helicase. Has single-stranded (ss)DNA-dependent ATPase activity and 5'-3' helicase activity on forked DNA; both activities were measure in a YoaA:HolC (chi) complex. Requires a 20-35 nucleotide (nt) 5'-ssDNA tail; dsDNA with a 20 nt gap is also unwound. Unwinds damaged 3' nascent ends (such as those terminated by 3' azidothymidine (AZT), 3' dideoxy-C or an abasic site on the translocating strand), to promote repair and AZT excision. Without HolC the protein has much lower activity which could be due to YoaA instability or helicase stimulation by HolC. Genetically identified as involved in the repair of replication forks and tolerance of the chain-terminating nucleoside analog AZT. May act in proofreading during nucleotide misincorporation, it appears to aid in the removal of potential A-to-T transversion mutations in ndk mutants. The polypeptide is ATP-dependent DNA helicase YoaA (yoaA) (Escherichia coli (strain K12)).